Reading from the N-terminus, the 78-residue chain is Small venom protein 2 (78 aa).

A signal peptide spans 1–19; sequence MKFIVLLGALLALLVAVSA. The propeptide occupies 20-42; the sequence is DRIAREAPEMESVDEAVLTRQAR.

Expressed by the venom gland.

It localises to the secreted. The protein is Small venom protein 2 of Pimpla hypochondriaca (Parasitoid wasp).